Consider the following 572-residue polypeptide: Proline--tRNA ligase (572 aa).

It belongs to the class-II aminoacyl-tRNA synthetase family. ProS type 1 subfamily. As to quaternary structure, homodimer.

It localises to the cytoplasm. It catalyses the reaction tRNA(Pro) + L-proline + ATP = L-prolyl-tRNA(Pro) + AMP + diphosphate. Catalyzes the attachment of proline to tRNA(Pro) in a two-step reaction: proline is first activated by ATP to form Pro-AMP and then transferred to the acceptor end of tRNA(Pro). As ProRS can inadvertently accommodate and process non-cognate amino acids such as alanine and cysteine, to avoid such errors it has two additional distinct editing activities against alanine. One activity is designated as 'pretransfer' editing and involves the tRNA(Pro)-independent hydrolysis of activated Ala-AMP. The other activity is designated 'posttransfer' editing and involves deacylation of mischarged Ala-tRNA(Pro). The misacylated Cys-tRNA(Pro) is not edited by ProRS. In Salmonella arizonae (strain ATCC BAA-731 / CDC346-86 / RSK2980), this protein is Proline--tRNA ligase.